The primary structure comprises 268 residues: MGQKIHPTGFRLAVSRNWASRWYANNNNFAAMLQEDIGVREYLKKKLKNASVGRVVIERPAKNARITIFSSRPGVVIGKKGEDIELLKSELQKRMGVPVHVNIEEIRKPETDAQLIADSITQQLERRIMFRRAMKRAMQNAMRLGAQGIKIMSAGRLNGIEIARTEWYREGRVPLHTLRADIDYATSEAKTTYGIIGVKVWVYKGDTLGRNDAPVVEEVAEEKRPRRNARPGGDRRPRRDGEGGGPAGARRGAPRRAGGAGGDGKTGE.

A KH type-2 domain is found at 39–107; the sequence is VREYLKKKLK…PVHVNIEEIR (69 aa). The disordered stretch occupies residues 216-268; the sequence is VEEVAEEKRPRRNARPGGDRRPRRDGEGGGPAGARRGAPRRAGGAGGDGKTGE. A compositionally biased stretch (basic and acidic residues) spans 232 to 242; it reads GGDRRPRRDGE. The segment covering 248–257 has biased composition (low complexity); sequence GARRGAPRRA. Positions 258-268 are enriched in gly residues; the sequence is GGAGGDGKTGE.

The protein belongs to the universal ribosomal protein uS3 family. In terms of assembly, part of the 30S ribosomal subunit. Forms a tight complex with proteins S10 and S14.

In terms of biological role, binds the lower part of the 30S subunit head. Binds mRNA in the 70S ribosome, positioning it for translation. This chain is Small ribosomal subunit protein uS3, found in Paraburkholderia phytofirmans (strain DSM 17436 / LMG 22146 / PsJN) (Burkholderia phytofirmans).